We begin with the raw amino-acid sequence, 222 residues long: MSSTTIALLSGGLDSATAAALAREAGHRVIGLSFDYGQRHQRELRAAAEVAQALGLAEHHTINVNLAAWGGSSLTDLDQPVPDQGVQDGVIPSTYVPGRNTVFIALGLSLAEAKGAERLVLGVNAIDYSGYPDCRPDYLDAYQHLADLASRSGREGHGTQLWAPLVEWSKTKIVEEALRLNVPIASTWSCYAGGDHPCGVCDSCRIRDAALREAGRPDLASR.

9–19 (LSGGLDSATAA) provides a ligand contact to ATP. Zn(2+) is bound by residues Cys190, Cys198, Cys201, and Cys204.

This sequence belongs to the QueC family. The cofactor is Zn(2+).

The catalysed reaction is 7-carboxy-7-deazaguanine + NH4(+) + ATP = 7-cyano-7-deazaguanine + ADP + phosphate + H2O + H(+). Its pathway is purine metabolism; 7-cyano-7-deazaguanine biosynthesis. Functionally, catalyzes the ATP-dependent conversion of 7-carboxy-7-deazaguanine (CDG) to 7-cyano-7-deazaguanine (preQ(0)). The polypeptide is 7-cyano-7-deazaguanine synthase (Synechococcus sp. (strain RCC307)).